Here is a 329-residue protein sequence, read N- to C-terminus: Phenylalanine--tRNA ligase alpha subunit (329 aa).

Residue glutamate 254 coordinates Mg(2+).

This sequence belongs to the class-II aminoacyl-tRNA synthetase family. Phe-tRNA synthetase alpha subunit type 1 subfamily. Tetramer of two alpha and two beta subunits. Mg(2+) serves as cofactor.

It is found in the cytoplasm. The catalysed reaction is tRNA(Phe) + L-phenylalanine + ATP = L-phenylalanyl-tRNA(Phe) + AMP + diphosphate + H(+). This Haemophilus influenzae (strain ATCC 51907 / DSM 11121 / KW20 / Rd) protein is Phenylalanine--tRNA ligase alpha subunit (pheS).